The chain runs to 868 residues: MAMPLCSLTSYNPITTTLRGHHFLTINAYVKTQCIPCFFIKLHTRSSGSKQRIIDLRSGSSNIVACVGEGATSLSSHSDIMKTAKREEIPPGVWKDDISDSIMSSHKPEADEKRVEILIAEIKSMFRGMGDGETTPSAYDTAWVAKIPALDGSDHPHFPQTLQWILQNQLQDGSWGEGTYFSTYDRLLATLACIITLTVWRTGQTQVRQGIEFFRKHAGTMEDEADNHQPIGFEFVFPAMINEAKSLCLDLPYDTPFIKQIIEKREAKLKMIPTDTLYTVPTTFLYYLEGLQEIIDCQKIIKLQSKDGSFLSSPASTAAVFMCTGNTKCLEFLNFVLIKFGNHVPCQYPLDLFERLWAVDIVERLGIDRHFKKEIKDALDYVYSHWDERGIRWARENPVAYIDVMATGIRILRLHRYNVSSDILKTFRDENGEFYRFPGQSERGVTDMLNLNRCSHVAFPGETVMEEAKLCTERYLWNALENVNPLDKWGLKENIRGEVEYALKYPWLRRLPRLETRNYIEHYGANDVWLGKMMHMMPYINDRKYLELAKLDFNNVQSIHQKELRELRRWWKSSGFAELNFLPDRVAEIFFSIASSMFEPELATCRAVYTKSTLCTVILDGFYDVHGSAEDIMLFNEAVKRWDHSLLDRMAEHIKTCFLALYNVVNEIAEEGRKRQGHDVLPYIRNLWEIQLESFTKEAEWSRAEHVPSFHEYIEAAAISSALPTLVLIGVIFTGEVLTDHILSQIDYRSKFAYLMSLTGRLANDTKTYQVERGQGEVASAIQCYMKENPELSEEEALEYIYRLMENALADFKCEFLNTKDVPEYCRRLVFDNARSMQLIYMEGDGFKLSHETEIKQHVKKILFEPVA.

The Mg(2+) site is built by D620, D624, N764, T768, and E772.

Belongs to the terpene synthase family. Tpsd subfamily. Mg(2+) is required as a cofactor.

It catalyses the reaction (+)-copalyl diphosphate = (-)-pimara-8(14),15-diene + diphosphate. Its pathway is terpene metabolism; oleoresin biosynthesis. Functionally, involved in defensive oleoresin formation in conifers in response to insect attack or other injury. Involved in diterpene (C20) olefins biosynthesis. Monofunctional enzyme lacking the DXDD motif in the class II active site relevant for the cyclization of geranylgeranyl diphosphate (GGPP). Requires (+)-copalyl diphosphate ((+)-CPP) as substrate, but no activity with GGPP or ent-CPP. Pimaradiene is the major products of the enzyme. This is Monofunctional pimaradiene synthase from Pinus contorta (Shore pine).